The primary structure comprises 425 residues: Bifunctional phosphoribosylaminoimidazole carboxylase/phosphoribosylaminoimidazole succinocarboxamide synthetase (425 aa).

N-acetylalanine is present on Ala-2. An SAICAR synthetase domain region spans residues 2 to 260; that stretch reads ATAVVVNIGK…WVADRVELLL (259 aa). Phosphotyrosine is present on Tyr-22. At Lys-36 the chain carries N6-acetyllysine. At Ser-107 the chain carries Phosphoserine. Thr-238 carries the phosphothreonine modification. Lys-247 bears the N6-acetyllysine mark. The linker stretch occupies residues 261–266; that stretch reads KSDSQC. An AIR carboxylase domain region spans residues 267–425; the sequence is RVVVLMGSTS…ADKKVRQCNL (159 aa). At Ser-274 the chain carries Phosphoserine. Ser-332 is a CO2 binding site.

It in the N-terminal section; belongs to the SAICAR synthetase family. In the C-terminal section; belongs to the AIR carboxylase family. Class II subfamily. In terms of assembly, homooctamer.

It carries out the reaction 5-amino-1-(5-phospho-D-ribosyl)imidazole-4-carboxylate + L-aspartate + ATP = (2S)-2-[5-amino-1-(5-phospho-beta-D-ribosyl)imidazole-4-carboxamido]succinate + ADP + phosphate + 2 H(+). It catalyses the reaction 5-amino-1-(5-phospho-D-ribosyl)imidazole-4-carboxylate + H(+) = 5-amino-1-(5-phospho-beta-D-ribosyl)imidazole + CO2. The protein operates within purine metabolism; IMP biosynthesis via de novo pathway; 5-amino-1-(5-phospho-D-ribosyl)imidazole-4-carboxamide from 5-amino-1-(5-phospho-D-ribosyl)imidazole-4-carboxylate: step 1/2. It functions in the pathway purine metabolism; IMP biosynthesis via de novo pathway; 5-amino-1-(5-phospho-D-ribosyl)imidazole-4-carboxylate from 5-amino-1-(5-phospho-D-ribosyl)imidazole (carboxylase route): step 1/1. Functionally, bifunctional phosphoribosylaminoimidazole carboxylase and phosphoribosylaminoimidazole succinocarboxamide synthetase catalyzing two reactions of the de novo purine biosynthetic pathway. This is Bifunctional phosphoribosylaminoimidazole carboxylase/phosphoribosylaminoimidazole succinocarboxamide synthetase from Mus musculus (Mouse).